Consider the following 365-residue polypeptide: Aminomethyltransferase (365 aa).

Belongs to the GcvT family. In terms of assembly, the glycine cleavage system is composed of four proteins: P, T, L and H.

The catalysed reaction is N(6)-[(R)-S(8)-aminomethyldihydrolipoyl]-L-lysyl-[protein] + (6S)-5,6,7,8-tetrahydrofolate = N(6)-[(R)-dihydrolipoyl]-L-lysyl-[protein] + (6R)-5,10-methylene-5,6,7,8-tetrahydrofolate + NH4(+). The glycine cleavage system catalyzes the degradation of glycine. In Cronobacter sakazakii (strain ATCC BAA-894) (Enterobacter sakazakii), this protein is Aminomethyltransferase.